Consider the following 104-residue polypeptide: Vesicle-associated membrane protein 3 (104 aa).

The disordered stretch occupies residues 1–23 (MTTNAPAGSSAAAGSSRRLQQTQ). The Cytoplasmic segment spans residues 1 to 81 (MTTNAPAGSS…KRKYWWKNCK (81 aa)). Low complexity predominate over residues 7 to 16 (AGSSAAAGSS). The v-SNARE coiled-coil homology domain occupies 18–78 (RLQQTQNQVD…AKLKRKYWWK (61 aa)). Residues Lys70, Lys72, and Lys81 each participate in a glycyl lysine isopeptide (Lys-Gly) (interchain with G-Cter in ubiquitin) cross-link. The chain crosses the membrane as a helical; Anchor for type IV membrane protein span at residues 82–102 (MWAIGITVVVIIIIIIVVWSI). Topologically, residues 103–104 (SS) are vesicular.

The protein belongs to the synaptobrevin family. In terms of assembly, interacts with POPDC1 (via the C-terminus cytoplasmic tail). Interacts with BCAP31; involved in VAMP3 export from the endoplasmic reticulum. Interacts with BAIAP3; this interaction is increased in the presence of calcium. Interacts with PICALM. Ubiquitinated by RNF167 at Lys-70, Lys-72 and Lys-81, regulating the recycling endosome pathway.

The protein resides in the early endosome membrane. It is found in the recycling endosome membrane. Its subcellular location is the synapse. The protein localises to the synaptosome. SNARE involved in vesicular transport from the late endosomes to the trans-Golgi network. This chain is Vesicle-associated membrane protein 3 (VAMP3), found in Bos taurus (Bovine).